Consider the following 345-residue polypeptide: Aspartate--ammonia ligase (345 aa).

Belongs to the class-II aminoacyl-tRNA synthetase family. AsnA subfamily.

It localises to the cytoplasm. The catalysed reaction is L-aspartate + NH4(+) + ATP = L-asparagine + AMP + diphosphate + H(+). The protein operates within amino-acid biosynthesis; L-asparagine biosynthesis; L-asparagine from L-aspartate (ammonia route): step 1/1. The polypeptide is Aspartate--ammonia ligase (Parabacteroides distasonis (strain ATCC 8503 / DSM 20701 / CIP 104284 / JCM 5825 / NCTC 11152)).